A 368-amino-acid polypeptide reads, in one-letter code: Cyclic AMP-responsive element-binding protein 3 (368 aa).

The tract at residues 1 to 95 (MSHMELALDP…LSQEHVSIDL (95 aa)) is transcription activation (acidic). The Cytoplasmic segment spans residues 1-229 (MSHMELALDP…VIQTANKASS (229 aa)). 2 consecutive short sequence motifs (LXXLL motif) follow at residues 16 to 20 (LGFLL) and 57 to 61 (LSCLP). The short motif at 81–84 (DHTY) is the HCFC1-binding-motif (HBM) element. A bZIP domain is found at 153-216 (VLKRVRRKIR…LSLLDQLRRL (64 aa)). The basic motif stretch occupies residues 155-184 (KRVRRKIRNKKSAQESRRKKKVYVGGLESR). Residues 186 to 193 (LKYTAQNL) form a leucine-zipper region. A helical; Signal-anchor for type II membrane protein membrane pass occupies residues 230 to 250 (SSTCVLVLLFSFCLLLVPAMY). The Lumenal segment spans residues 251–368 (SSDTRGSLPA…SVILQGRYSG (118 aa)). N344 is a glycosylation site (N-linked (GlcNAc...) asparagine).

This sequence belongs to the bZIP family. ATF subfamily. As to quaternary structure, homodimer. Interacts with HCFC1; the interaction is required to stimulate CREB3 transcriptional activity. Interacts with CREBZF; the interaction occurs only in combination with HCFC1. Interacts (via central part and transmembrane region) with DCSTAMP (via C-terminus cytoplasmic domain). Interacts with OS9. Interacts (via leucine-zipper domain) with CREBRF (via leucine-zipper domain); the interaction occurs only after CREB3 activation and promotes CREB3 degradation. Interacts (via C-terminal domain) with CCR1. In terms of processing, first proteolytically cleaved by site-1 protease (S1P) that generates membrane-associated N-terminus and a luminal C-terminus forms. The membrane-associated N-terminus form is further proteolytically processed probably by the site-2 protease (S2P) through a regulated intramembrane proteolysis (RIP), releasing the transcriptional active processed cyclic AMP-responsive element-binding protein 3 form, which is transported to the nucleus. The proteolytic cleavage is strongly induced during dendritic cell (DC) maturation and inhibited by DCSTAMP. That form is rapidly degraded. Post-translationally, N-glycosylated. In terms of tissue distribution, expressed in trigeminal ganglia (at protein level).

The protein resides in the endoplasmic reticulum membrane. It is found in the golgi apparatus. It localises to the nucleus. Its subcellular location is the cytoplasm. Functionally, endoplasmic reticulum (ER)-bound sequence-specific transcription factor that directly binds DNA and activates transcription. Plays a role in the unfolded protein response (UPR), promoting cell survival versus ER stress-induced apoptotic cell death. Also involved in cell proliferation, migration and differentiation, tumor suppression and inflammatory gene expression. Acts as a positive regulator of LKN-1/CCL15-induced chemotaxis signaling of leukocyte cell migration. Associates with chromatin to the HERPUD1 promoter. Also induces transcriptional activation of chemokine receptors. Functions as a negative transcriptional regulator in ligand-induced transcriptional activation of the glucocorticoid receptor NR3C1 by recruiting and activating histone deacetylases (HDAC1, HDAC2 and HDAC6). Also decreases the acetylation level of histone H4. Does not promote the chemotactic activity of leukocyte cells. In terms of biological role, this is the transcriptionally active form that translocates to the nucleus and activates unfolded protein response (UPR) target genes during endoplasmic reticulum (ER) stress response. Binds the cAMP response element (CRE) (consensus: 5'-GTGACGT[AG][AG]-3') and C/EBP sequences present in many promoters to activate transcription of the genes. Binds to the unfolded protein response element (UPRE) consensus sequences sites. Binds DNA to the 5'-CCAC[GA]-3'half of ERSE II (5'-ATTGG-N-CCACG-3'). This is Cyclic AMP-responsive element-binding protein 3 (CREB3) from Bos taurus (Bovine).